The sequence spans 196 residues: Probable GTP-binding protein EngB (196 aa).

Residues S22–E193 form the EngB-type G domain. Residues G30–S37, G57–L61, D75–G78, T142–D145, and F172–A174 each bind GTP. Mg(2+) is bound by residues S37 and T59.

The protein belongs to the TRAFAC class TrmE-Era-EngA-EngB-Septin-like GTPase superfamily. EngB GTPase family. Requires Mg(2+) as cofactor.

Its function is as follows. Necessary for normal cell division and for the maintenance of normal septation. The protein is Probable GTP-binding protein EngB of Syntrophus aciditrophicus (strain SB).